Consider the following 492-residue polypeptide: Tyrosinase-like protein 1 (492 aa).

A signal peptide spans 1 to 22 (MDKMRTLQSLIVKLTLLYGALC). His147, His155, His164, His289, His293, and His316 together coordinate Cu cation. The disordered stretch occupies residues 472–492 (SEPPLQLEGPSFTSSFDDPRI). The span at 482–492 (SFTSSFDDPRI) shows a compositional bias: polar residues.

Requires Cu(2+) as cofactor. As to expression, prismatic layer of shell (at protein level). Expressed primarily in the mantle with highest level in the mantle edge and lower level in the mantle pallium.

Its subcellular location is the secreted. This Margaritifera margaritifera (Freshwater pearl mussel) protein is Tyrosinase-like protein 1.